The primary structure comprises 337 residues: tRNA N6-adenosine threonylcarbamoyltransferase (337 aa).

Residues H114 and H118 each contribute to the Fe cation site. Substrate is bound by residues 136–140, D169, G182, D186, and N275; that span reads LVSGG. D301 provides a ligand contact to Fe cation.

It belongs to the KAE1 / TsaD family. It depends on Fe(2+) as a cofactor.

Its subcellular location is the cytoplasm. The catalysed reaction is L-threonylcarbamoyladenylate + adenosine(37) in tRNA = N(6)-L-threonylcarbamoyladenosine(37) in tRNA + AMP + H(+). In terms of biological role, required for the formation of a threonylcarbamoyl group on adenosine at position 37 (t(6)A37) in tRNAs that read codons beginning with adenine. Is involved in the transfer of the threonylcarbamoyl moiety of threonylcarbamoyl-AMP (TC-AMP) to the N6 group of A37, together with TsaE and TsaB. TsaD likely plays a direct catalytic role in this reaction. The polypeptide is tRNA N6-adenosine threonylcarbamoyltransferase (Streptococcus thermophilus (strain ATCC BAA-491 / LMD-9)).